A 468-amino-acid chain; its full sequence is Eukaryotic translation initiation factor 3 subunit M (468 aa).

A disordered region spans residues 40–61 (VAPLIEPLRQQEQSEEEPDRKQ). The 172-residue stretch at 206-377 (DLELAQTHVV…SEFLVHRATY (172 aa)) folds into the PCI domain. The disordered stretch occupies residues 419–468 (QAAAEEVGQGKSGDKGAKGGDRRRNPQQQQQSQPSQPQQAREVELVGGAE). The segment covering 430–442 (SGDKGAKGGDRRR) has biased composition (basic and acidic residues). A compositionally biased stretch (low complexity) spans 444–457 (PQQQQQSQPSQPQQ).

The protein belongs to the eIF-3 subunit M family. Component of the eukaryotic translation initiation factor 3 (eIF-3) complex.

The protein localises to the cytoplasm. In terms of biological role, component of the eukaryotic translation initiation factor 3 (eIF-3) complex, which is involved in protein synthesis of a specialized repertoire of mRNAs and, together with other initiation factors, stimulates binding of mRNA and methionyl-tRNAi to the 40S ribosome. The eIF-3 complex specifically targets and initiates translation of a subset of mRNAs involved in cell proliferation. This is Eukaryotic translation initiation factor 3 subunit M from Aspergillus fumigatus (strain CBS 144.89 / FGSC A1163 / CEA10) (Neosartorya fumigata).